We begin with the raw amino-acid sequence, 197 residues long: Auxin-responsive protein IAA19 (197 aa).

The EAR-like (transcriptional repression) signature appears at 13 to 17; it reads LRLGL. A compositionally biased stretch (polar residues) spans 35–47; sequence MNMTSSGSNSDQC. A disordered region spans residues 35-67; the sequence is MNMTSSGSNSDQCESGVVSSGGDAEKVNDSPAA. Residues 96–184 enclose the PB1 domain; sequence LGYVKVSMDG…KRLRIMKRSD (89 aa).

This sequence belongs to the Aux/IAA family. Homodimers and heterodimers. Interacts with the auxin response factor ARF7.

The protein resides in the nucleus. Functionally, aux/IAA proteins are short-lived transcriptional factors that function as repressors of early auxin response genes at low auxin concentrations. Repression is thought to result from the interaction with auxin response factors (ARFs), proteins that bind to the auxin-responsive promoter element (AuxRE). Formation of heterodimers with ARF proteins may alter their ability to modulate early auxin response genes expression. In Arabidopsis thaliana (Mouse-ear cress), this protein is Auxin-responsive protein IAA19 (IAA19).